A 475-amino-acid polypeptide reads, in one-letter code: Beta-amyrin 6-beta-monooxygenase (475 aa).

The chain crosses the membrane as a helical span at residues 6–22 (LYSLAFALVYISLYFIF). C423 is a binding site for heme.

The protein belongs to the cytochrome P450 family. Heme serves as cofactor. In terms of tissue distribution, specifically expressed in roots.

The protein resides in the membrane. It carries out the reaction beta-amyrin + reduced [NADPH--hemoprotein reductase] + O2 = daturadiol + oxidized [NADPH--hemoprotein reductase] + H2O + H(+). Catalyzes the C-6 beta-hydroxylation of beta-amyrin to form daturadiol. Catalyzes the C-6 beta-hydroxylation of alpha-amyrin to form 6-beta-hydroxy-alpha-amyrin. The protein is Beta-amyrin 6-beta-monooxygenase of Solanum lycopersicum (Tomato).